The sequence spans 95 residues: Opiscorpine-3 (95 aa).

An N-terminal signal peptide occupies residues 1–19 (MNNKLTALIFLGLLAIASC). One can recognise a BetaSPN-type CS-alpha/beta domain in the interval 55 to 95 (EFMCVANVDMTKSCDTHCQKASGEKGYCHGTKCKCGVPLSY). 3 cysteine pairs are disulfide-bonded: Cys58–Cys82, Cys68–Cys87, and Cys72–Cys89.

It belongs to the long chain scorpion toxin family. Class 3 subfamily. As to expression, expressed by the venom gland.

The protein resides in the secreted. Has antimicrobial activity against yeasts and bacteria. The sequence is that of Opiscorpine-3 from Opistophthalmus carinatus (African yellow leg scorpion).